Here is a 949-residue protein sequence, read N- to C-terminus: Glycine dehydrogenase (decarboxylating) (949 aa).

K700 is subject to N6-(pyridoxal phosphate)lysine.

The protein belongs to the GcvP family. In terms of assembly, the glycine cleavage system is composed of four proteins: P, T, L and H. Pyridoxal 5'-phosphate is required as a cofactor.

The catalysed reaction is N(6)-[(R)-lipoyl]-L-lysyl-[glycine-cleavage complex H protein] + glycine + H(+) = N(6)-[(R)-S(8)-aminomethyldihydrolipoyl]-L-lysyl-[glycine-cleavage complex H protein] + CO2. Functionally, the glycine cleavage system catalyzes the degradation of glycine. The P protein binds the alpha-amino group of glycine through its pyridoxal phosphate cofactor; CO(2) is released and the remaining methylamine moiety is then transferred to the lipoamide cofactor of the H protein. This is Glycine dehydrogenase (decarboxylating) from Christiangramia forsetii (strain DSM 17595 / CGMCC 1.15422 / KT0803) (Gramella forsetii).